The following is a 363-amino-acid chain: tRNA N6-adenosine threonylcarbamoyltransferase (363 aa).

Fe cation-binding residues include H121 and H125. Substrate-binding positions include L143–G147, D176, G189, and N287. Residue D315 participates in Fe cation binding.

Belongs to the KAE1 / TsaD family. It depends on Fe(2+) as a cofactor.

It localises to the cytoplasm. The enzyme catalyses L-threonylcarbamoyladenylate + adenosine(37) in tRNA = N(6)-L-threonylcarbamoyladenosine(37) in tRNA + AMP + H(+). Required for the formation of a threonylcarbamoyl group on adenosine at position 37 (t(6)A37) in tRNAs that read codons beginning with adenine. Is involved in the transfer of the threonylcarbamoyl moiety of threonylcarbamoyl-AMP (TC-AMP) to the N6 group of A37, together with TsaE and TsaB. TsaD likely plays a direct catalytic role in this reaction. In Rhodopseudomonas palustris (strain ATCC BAA-98 / CGA009), this protein is tRNA N6-adenosine threonylcarbamoyltransferase.